Here is a 331-residue protein sequence, read N- to C-terminus: 3-dehydroquinate synthase homolog (331 aa).

This sequence belongs to the archaeal-type DHQ synthase family.

This is 3-dehydroquinate synthase homolog from Aquifex aeolicus (strain VF5).